We begin with the raw amino-acid sequence, 372 residues long: Probable inactive receptor-like protein kinase At1g65250 (372 aa).

ATP-binding positions include 1–4 and Lys-38; that span reads MGWL. Residues 1 to 314 form the Protein kinase domain; the sequence is MGWLRKKKKP…QERCQMKAFL (314 aa). 2 positions are modified to phosphotyrosine: Tyr-128 and Tyr-221. Positions 348–372 are disordered; sequence SSSLSSGQTQLDSAQDISSTVVLSN. The segment covering 354–372 has biased composition (polar residues); the sequence is GQTQLDSAQDISSTVVLSN.

This sequence belongs to the protein kinase superfamily.

This chain is Probable inactive receptor-like protein kinase At1g65250, found in Arabidopsis thaliana (Mouse-ear cress).